A 357-amino-acid polypeptide reads, in one-letter code: 3-isopropylmalate dehydrogenase (357 aa).

Residues arginine 97, arginine 107, arginine 135, and aspartate 224 each coordinate substrate. Aspartate 224, aspartate 248, and aspartate 252 together coordinate Mg(2+). Glycine 282–asparagine 294 contributes to the NAD(+) binding site.

It belongs to the isocitrate and isopropylmalate dehydrogenases family. LeuB type 1 subfamily. As to quaternary structure, homodimer. Mg(2+) serves as cofactor. Mn(2+) is required as a cofactor.

The protein localises to the cytoplasm. It carries out the reaction (2R,3S)-3-isopropylmalate + NAD(+) = 4-methyl-2-oxopentanoate + CO2 + NADH. It participates in amino-acid biosynthesis; L-leucine biosynthesis; L-leucine from 3-methyl-2-oxobutanoate: step 3/4. Its function is as follows. Catalyzes the oxidation of 3-carboxy-2-hydroxy-4-methylpentanoate (3-isopropylmalate) to 3-carboxy-4-methyl-2-oxopentanoate. The product decarboxylates to 4-methyl-2 oxopentanoate. In Prochlorococcus marinus (strain MIT 9312), this protein is 3-isopropylmalate dehydrogenase.